The sequence spans 182 residues: Large ribosomal subunit protein uL6 (182 aa).

Belongs to the universal ribosomal protein uL6 family. As to quaternary structure, part of the 50S ribosomal subunit.

In terms of biological role, this protein binds to the 23S rRNA, and is important in its secondary structure. It is located near the subunit interface in the base of the L7/L12 stalk, and near the tRNA binding site of the peptidyltransferase center. This Aeropyrum pernix (strain ATCC 700893 / DSM 11879 / JCM 9820 / NBRC 100138 / K1) protein is Large ribosomal subunit protein uL6.